We begin with the raw amino-acid sequence, 365 residues long: Methionine import ATP-binding protein MetN (365 aa).

The ABC transporter domain maps to 26 to 261 (VRLVDLKRRF…PQSDITKSLL (236 aa)). An ATP-binding site is contributed by 58–65 (GRSGAGKS).

It belongs to the ABC transporter superfamily. Methionine importer (TC 3.A.1.24) family. As to quaternary structure, the complex is composed of two ATP-binding proteins (MetN), two transmembrane proteins (MetI) and a solute-binding protein (MetQ).

Its subcellular location is the cell inner membrane. The catalysed reaction is L-methionine(out) + ATP + H2O = L-methionine(in) + ADP + phosphate + H(+). It carries out the reaction D-methionine(out) + ATP + H2O = D-methionine(in) + ADP + phosphate + H(+). Functionally, part of the ABC transporter complex MetNIQ involved in methionine import. Responsible for energy coupling to the transport system. The chain is Methionine import ATP-binding protein MetN from Mesorhizobium japonicum (strain LMG 29417 / CECT 9101 / MAFF 303099) (Mesorhizobium loti (strain MAFF 303099)).